Consider the following 86-residue polypeptide: Putative regulatory protein Dvul_2085 (86 aa).

It belongs to the RemA family.

The protein is Putative regulatory protein Dvul_2085 of Nitratidesulfovibrio vulgaris (strain DP4) (Desulfovibrio vulgaris).